The following is a 415-amino-acid chain: MLAKTDPVINDLIKQEENRQRHNIELIASENIVSGAVQEAQGSVLTNKYAEGYPNKRFYGGCEYIDQIETLAIERAKELFGADHVNVQPHSGSQANMAVYQALLEPGDKILGMNLTDGGHLTHGSPFNFSGQLYDFYSYGVADTNEQLDYASLAAKAQEVHPKMIVAGASAYSRTIDFPRLREIADQVGAYLMIDMAHIAGLVATGVHPSPVPYADVVTTTTHKTLRGPRGGMILCKAEYAKAIDSAIFPGIQGGPLEHVIAAKAVAFGEALQPEFTAYTKQIVANAQAMAAVFDQSDLVRVVSGGTDNHLMLLDLTNSGLNGKELQNLLDSVHITVNKNTIPFEKLSPFKTSGIRIGTPAITSRGFKEKDCEQIANLILEVIEKHDQLEAMTAISEAVLKLTDQFPITQAKFLD.

Residues L115 and 119 to 121 (GHL) each bind (6S)-5,6,7,8-tetrahydrofolate. Position 224 is an N6-(pyridoxal phosphate)lysine (K224). 348–350 (SPF) contacts (6S)-5,6,7,8-tetrahydrofolate.

The protein belongs to the SHMT family. Homodimer. The cofactor is pyridoxal 5'-phosphate.

The protein localises to the cytoplasm. The enzyme catalyses (6R)-5,10-methylene-5,6,7,8-tetrahydrofolate + glycine + H2O = (6S)-5,6,7,8-tetrahydrofolate + L-serine. It participates in one-carbon metabolism; tetrahydrofolate interconversion. It functions in the pathway amino-acid biosynthesis; glycine biosynthesis; glycine from L-serine: step 1/1. Functionally, catalyzes the reversible interconversion of serine and glycine with tetrahydrofolate (THF) serving as the one-carbon carrier. This reaction serves as the major source of one-carbon groups required for the biosynthesis of purines, thymidylate, methionine, and other important biomolecules. Also exhibits THF-independent aldolase activity toward beta-hydroxyamino acids, producing glycine and aldehydes, via a retro-aldol mechanism. In Latilactobacillus sakei subsp. sakei (strain 23K) (Lactobacillus sakei subsp. sakei), this protein is Serine hydroxymethyltransferase.